The primary structure comprises 166 residues: Endoribonuclease YbeY (166 aa).

3 residues coordinate Zn(2+): His129, His133, and His139.

It belongs to the endoribonuclease YbeY family. It depends on Zn(2+) as a cofactor.

It is found in the cytoplasm. In terms of biological role, single strand-specific metallo-endoribonuclease involved in late-stage 70S ribosome quality control and in maturation of the 3' terminus of the 16S rRNA. In Heliobacterium modesticaldum (strain ATCC 51547 / Ice1), this protein is Endoribonuclease YbeY.